A 317-amino-acid polypeptide reads, in one-letter code: Melanocyte-stimulating hormone receptor (317 aa).

Over 1 to 37 (MPVLGSQRRLLGSLNCTPPATFPLTLAPNRTGPQCLE) the chain is Extracellular. The N-linked (GlcNAc...) asparagine glycan is linked to Asn29. The helical transmembrane segment at 38 to 63 (VSIPDGLFLSLGLVSLVENVLVVAAI) threads the bilayer. At 64–72 (AKNRNLHSP) the chain is on the cytoplasmic side. The helical transmembrane segment at 73–93 (MYYFICCLAMSDLLVSVSNVL) threads the bilayer. Over 94-118 (ETAVMLLLEAGALAAQAAVVQQLDN) the chain is Extracellular. A helical membrane pass occupies residues 119-140 (VIDVLICGSMVSSLCFLGAIAV). Residues 141 to 163 (DRYISIFYALRYHSVVTLPRAWR) are Cytoplasmic-facing. Residues 164-183 (IIAAIWVASILTSLLFITYY) form a helical membrane-spanning segment. Residues 184–191 (NHTVVLLC) lie on the Extracellular side of the membrane. A helical membrane pass occupies residues 192–211 (LVGFFIAMLALMAVLYVHML). Residues 212–240 (ARACQHARGIARLQKRQRPIHQGFGLKGA) are Cytoplasmic-facing. The helical transmembrane segment at 241–266 (ATLTILLGVFFLCWGPFFLHLSLIVL) threads the bilayer. The Extracellular portion of the chain corresponds to 267-279 (CPQHPTCGCIFKN). The helical transmembrane segment at 280-300 (FNLFLALIICNAIVDPLIYAF) threads the bilayer. The Cytoplasmic portion of the chain corresponds to 301–317 (RSQELRKTLQEVLQCSW). The S-palmitoyl cysteine moiety is linked to residue Cys315.

Belongs to the G-protein coupled receptor 1 family. In terms of assembly, interacts with MGRN1, but does not undergo MGRN1-mediated ubiquitination; this interaction competes with GNAS-binding and thus inhibits agonist-induced cAMP production. Interacts with OPN3; the interaction results in a decrease in MC1R-mediated cAMP signaling and ultimately a decrease in melanin production in melanocytes.

It is found in the cell membrane. Functionally, receptor for MSH (alpha, beta and gamma) and ACTH. The activity of this receptor is mediated by G proteins which activate adenylate cyclase. Mediates melanogenesis, the production of eumelanin (black/brown) and phaeomelanin (red/yellow), via regulation of cAMP signaling in melanocytes. In Dama dama (Fallow deer), this protein is Melanocyte-stimulating hormone receptor (MC1R).